The sequence spans 335 residues: Large ribosomal subunit protein uL3 (335 aa).

Disordered stretches follow at residues methionine 1–glycine 35, isoleucine 234–glycine 256, and alanine 312–glycine 335. A compositionally biased stretch (polar residues) spans arginine 244 to glycine 256.

This sequence belongs to the universal ribosomal protein uL3 family. In terms of assembly, part of the 50S ribosomal subunit. Forms a cluster with proteins L14 and L24e.

In terms of biological role, one of the primary rRNA binding proteins, it binds directly near the 3'-end of the 23S rRNA, where it nucleates assembly of the 50S subunit. This Halobacterium salinarum (strain ATCC 29341 / DSM 671 / R1) protein is Large ribosomal subunit protein uL3.